Consider the following 554-residue polypeptide: Malate synthase 1 (554 aa).

The active-site Proton acceptor is the R177. D457 (proton donor) is an active-site residue. Residues 552 to 554 (SKL) carry the SKL peroxisome targeting motif motif.

The protein belongs to the malate synthase family. Interacts with PEX9.

It localises to the peroxisome matrix. The enzyme catalyses glyoxylate + acetyl-CoA + H2O = (S)-malate + CoA + H(+). The protein operates within carbohydrate metabolism; glyoxylate cycle; (S)-malate from isocitrate: step 2/2. In terms of biological role, malate synthase which takes part in the glyoxylate cycle. MLS1 activity is essential for cells to grow on oleic acid as a sole carbon source. Two steps of the glyoxylate cycle take place in the cytosol, the splitting of isocitrate into succinate and glyoxylate, and the dehydrogenation of malate to oxaloacetate. However, the formation of malate from glyoxylate and acetyl-CoA undertaken MLS1, occurs in the peroxisomes when cells are grown on oleic acid. The source of acetyl-CoA being either peroxisomal when breaking down fatty acids, or cytosolic when extra-cellular two-carbon substrates are used, therefore, although not strictly essential, the peroxisomal localization of MLS1 appears to be advantageous for cells growing on oleic acid, in that acetyl-CoA production and utilization are thereby intimately compartmentalized together to increase efficiency. In Saccharomyces cerevisiae (strain YJM789) (Baker's yeast), this protein is Malate synthase 1.